Consider the following 439-residue polypeptide: D-inositol 3-phosphate glycosyltransferase (439 aa).

Residue His21 participates in 1D-myo-inositol 3-phosphate binding. UDP-N-acetyl-alpha-D-glucosamine is bound by residues 27-28 and Gly35; that span reads QP. 1D-myo-inositol 3-phosphate is bound by residues 32-37, Lys90, Tyr123, Thr147, and Arg167; that span reads DAGGMN. UDP-N-acetyl-alpha-D-glucosamine is bound by residues Arg241, Lys246, and Gln299. Mg(2+)-binding residues include Tyr308, Arg309, and Ala311. Residues Glu321 and Glu329 each contribute to the UDP-N-acetyl-alpha-D-glucosamine site. A Mg(2+)-binding site is contributed by Thr335.

It belongs to the glycosyltransferase group 1 family. MshA subfamily. In terms of assembly, homodimer.

It carries out the reaction 1D-myo-inositol 3-phosphate + UDP-N-acetyl-alpha-D-glucosamine = 1D-myo-inositol 2-acetamido-2-deoxy-alpha-D-glucopyranoside 3-phosphate + UDP + H(+). Catalyzes the transfer of a N-acetyl-glucosamine moiety to 1D-myo-inositol 3-phosphate to produce 1D-myo-inositol 2-acetamido-2-deoxy-glucopyranoside 3-phosphate in the mycothiol biosynthesis pathway. This chain is D-inositol 3-phosphate glycosyltransferase, found in Mycobacterium sp. (strain KMS).